We begin with the raw amino-acid sequence, 645 residues long: Minor extracellular protease Epr (645 aa).

Positions 1–27 are cleaved as a signal peptide; that stretch reads MKNMSCKLVVSVTLFFSFLTIGPLAHA. Positions 28–103 are excised as a propeptide; the sequence is QNSSEKEVIV…AADSTDFKVL (76 aa). The region spanning 115–382 is the Peptidase S8 domain; that stretch reads QWNLEPIQVK…YGLIQYKAQA (268 aa). Residues D142, H172, and S326 each act as charge relay system in the active site. Disordered regions lie at residues 490–577 and 591–645; these read KQAK…KTAL and AEAK…KPKK. Basic and acidic residues predominate over residues 491–508; that stretch reads QAKDKVAKAEKSKKKTDV. Residues 522–547 show a composition bias toward polar residues; it reads SEKTSLQKRLNKVKSTNLKTAQQSVS. The segment covering 592 to 610 has biased composition (basic and acidic residues); sequence EAKKVETAKAKVKKAEKDK.

This sequence belongs to the peptidase S8 family. Post-translationally, may undergo two steps of processing in its passage through the cell membrane: removal of the N-terminal signal sequence and cleavage of the C-terminal domain. Several active forms of Epr with molecular masses between 40 and 34 kDa were found in the medium of B.subtilis cultures. The size variation of the active forms expressed by the complete epr gene appears to be the result of partial removal of the C-terminus either by processing or degradation.

It localises to the secreted. It is found in the cell wall. Requires Ca(2+) for stability. Activity is inhibited by phenylmethylsulfonyl fluoride (PMSF) and EDTA. Serine protease. Involved in the production of the competence and sporulation stimulating factor CSF. In addition, is essential for swarming motility. Plays a key role in DegU-mediated swarming motility. The protease activity is dispensable for swarming. Not essential for growth or sporulation. This chain is Minor extracellular protease Epr, found in Bacillus subtilis (strain 168).